Consider the following 197-residue polypeptide: Dephospho-CoA kinase (197 aa).

The region spanning 3-197 (VLGLTGSIGL…IDELRGQRGS (195 aa)) is the DPCK domain. 11–16 (GLGKST) lines the ATP pocket.

It belongs to the CoaE family.

Its subcellular location is the cytoplasm. It catalyses the reaction 3'-dephospho-CoA + ATP = ADP + CoA + H(+). The protein operates within cofactor biosynthesis; coenzyme A biosynthesis; CoA from (R)-pantothenate: step 5/5. Its function is as follows. Catalyzes the phosphorylation of the 3'-hydroxyl group of dephosphocoenzyme A to form coenzyme A. The polypeptide is Dephospho-CoA kinase (Mesorhizobium japonicum (strain LMG 29417 / CECT 9101 / MAFF 303099) (Mesorhizobium loti (strain MAFF 303099))).